Reading from the N-terminus, the 69-residue chain is Conotoxin Lt5.10 (69 aa).

Positions 1–19 (MLCLPVFIILLLLASPAAP) are cleaved as a signal peptide. A propeptide spanning residues 20-54 (KSLETRIQNDLIRAGLTDADLKTEKGFLSGLLNVA) is cleaved from the precursor.

Belongs to the conotoxin T superfamily. Contains 2 disulfide bonds that can be either 'C1-C3, C2-C4' or 'C1-C4, C2-C3', since these disulfide connectivities have been observed for conotoxins with cysteine framework V (for examples, see AC P0DQQ7 and AC P81755). In terms of tissue distribution, expressed by the venom duct.

Its subcellular location is the secreted. The polypeptide is Conotoxin Lt5.10 (Conus litteratus (Lettered cone)).